Consider the following 264-residue polypeptide: 3-methyl-2-oxobutanoate hydroxymethyltransferase (264 aa).

Asp45 and Asp84 together coordinate Mg(2+). 3-methyl-2-oxobutanoate is bound by residues 45–46, Asp84, and Lys112; that span reads DS. Glu114 is a Mg(2+) binding site. Glu181 serves as the catalytic Proton acceptor.

The protein belongs to the PanB family. In terms of assembly, homodecamer; pentamer of dimers. The cofactor is Mg(2+).

The protein resides in the cytoplasm. The enzyme catalyses 3-methyl-2-oxobutanoate + (6R)-5,10-methylene-5,6,7,8-tetrahydrofolate + H2O = 2-dehydropantoate + (6S)-5,6,7,8-tetrahydrofolate. The protein operates within cofactor biosynthesis; (R)-pantothenate biosynthesis; (R)-pantoate from 3-methyl-2-oxobutanoate: step 1/2. Its function is as follows. Catalyzes the reversible reaction in which hydroxymethyl group from 5,10-methylenetetrahydrofolate is transferred onto alpha-ketoisovalerate to form ketopantoate. The sequence is that of 3-methyl-2-oxobutanoate hydroxymethyltransferase from Aeromonas hydrophila subsp. hydrophila (strain ATCC 7966 / DSM 30187 / BCRC 13018 / CCUG 14551 / JCM 1027 / KCTC 2358 / NCIMB 9240 / NCTC 8049).